The primary structure comprises 281 residues: MKKLIFLIVIALVLSACNSNSSHAKELNDLEKKYNAHIGVYALDTKSGKEVKFNSDKRFAYASTSKAINSAILLEQVPYNKLNKKVHINKDDIVAYSPILEKYVGKDITLKALIEASMTYSDNTANNKIIKEIGGIKKVKQRLKELGDKVTNPVRYEIELNYYSPKSKKDTSTPAAFGKTLNKLIANGKLSKENKKFLLDLMLNNKSGDTLIKDGVPKDYKVADKSGQAITYASRNDVAFVYPKGQSEPIVLVIFTNKDNKSDKPNDKLISETAKSVMKEF.

The N-terminal stretch at 1–24 (MKKLIFLIVIALVLSACNSNSSHA) is a signal peptide. The active-site Acyl-ester intermediate is the S63. Residue 225–227 (KSG) coordinates substrate.

It belongs to the class-A beta-lactamase family.

The catalysed reaction is a beta-lactam + H2O = a substituted beta-amino acid. The sequence is that of Beta-lactamase (blaZ) from Staphylococcus aureus.